The following is a 75-amino-acid chain: Putative snRNP Sm-like protein (75 aa).

The 72-residue stretch at 4–75 (RPLDVIHRSL…NVLAISPTEE (72 aa)) folds into the Sm domain.

It belongs to the snRNP Sm proteins family.

This is Putative snRNP Sm-like protein from Pyrococcus abyssi (strain GE5 / Orsay).